The following is a 223-amino-acid chain: Probable 3-beta-hydroxysteroid-Delta(8),Delta(7)-isomerase (223 aa).

4 helical membrane-spanning segments follow: residues 28–48 (IVSIYLGSSLLVVSLVWLLFG), 58–78 (LMCWWTFTGLTHVILEGYFVF), 115–135 (VEGITAVIVGPASLLAIYAIA), and 175–195 (FYYYSYYIGANCWWVLIPSLI). Residues 54-196 (LDKLLMCWWT…WWVLIPSLIS (143 aa)) enclose the EXPERA domain.

Belongs to the EBP family.

It is found in the endoplasmic reticulum membrane. The catalysed reaction is lathosterol = 5alpha-cholest-8-en-3beta-ol. It participates in steroid biosynthesis; sterol biosynthesis. In terms of biological role, catalyzes the conversion of Delta(8)-sterols to their corresponding Delta(7)-isomers. This chain is Probable 3-beta-hydroxysteroid-Delta(8),Delta(7)-isomerase, found in Arabidopsis thaliana (Mouse-ear cress).